A 132-amino-acid polypeptide reads, in one-letter code: Probable prefoldin subunit 4 (132 aa).

Belongs to the prefoldin subunit beta family. In terms of assembly, heterohexamer of two PFD-alpha type and four PFD-beta type subunits.

In terms of biological role, binds specifically to cytosolic chaperonin (c-CPN) and transfers target proteins to it. Binds to nascent polypeptide chain and promotes folding in an environment in which there are many competing pathways for nonnative proteins. The chain is Probable prefoldin subunit 4 (pfdn4) from Dictyostelium discoideum (Social amoeba).